The sequence spans 777 residues: Cyclin-F (777 aa).

Residues 20–28 carry the Nuclear localization signal 1 motif; it reads KRRIKRRPR. An F-box domain is found at 29-76; sequence NLTILSLPEDVLFHILKWLSVGDILAVRAVHSHLKYLVDNHASVWASA. The Cyclin N-terminal domain maps to 288-405; sequence QASQAVNKQQ…EIISALEGKI (118 aa). Short sequence motifs (d box) lie at residues 310–313, 343–346, and 349–352; these read RYIL, RRRL, and RYKL. 2 disordered regions span residues 544–591 and 651–777; these read QESP…TPTA and QESS…HLAS. A Nuclear localization signal 2 motif is present at residues 568–574; sequence RRSKRKR. The PEST stretch occupies residues 582-761; sequence RGSFVTTPTA…ESGVHQQPVK (180 aa). Composition is skewed to low complexity over residues 695-708 and 719-731; these read SGYS…PISS and STSV…HSST. Residues 751 to 767 are compositionally biased toward polar residues; the sequence is PESGVHQQPVKRQNLSV. The D box 4 motif lies at 762-765; sequence RQNL. Over residues 768-777 the composition is skewed to basic and acidic residues; the sequence is HSDKDMHLAS.

The protein belongs to the cyclin family. Cyclin AB subfamily. Component of the SCF(CCNF) complex consisting of CUL1, RBX1, SKP1 and CCNF. Interacts with SKP1. Interacts with CUL1. Interacts with CCNB1; interaction is required for nuclear localization of CCNB1. Interacts with CCP110; this interaction leads to CCP110 ubiquitination and degradation via the proteasome pathway. Interacts (via the Cyclin N-terminal domain) with MYBL2/BMYB. Interacts with FZR1/CDH1 (via N-terminus). Interacts with RRM2 (via Cy motif and when phosphorylated at 'Thr-33'); the interaction occurs exclusively in G2 and early M. Interacts with CDC6 (via Cy motif); the interaction takes place during G2 and M phase. Post-translationally, degraded when the spindle assembly checkpoint is activated during the G2-M transition. Degradation is not dependent on the proteasome or ubiquitin and depends on the C-terminal PEST sequence. In terms of processing, phosphorylated just before cells enter into mitosis. Ubiquitinated by the anaphase-promoting complex (APC/C); leading to its degradation by the proteasome.

The protein resides in the nucleus. It localises to the cytoplasm. The protein localises to the perinuclear region. It is found in the cytoskeleton. Its subcellular location is the microtubule organizing center. The protein resides in the centrosome. It localises to the centriole. In terms of biological role, substrate recognition component of a SCF (SKP1-CUL1-F-box protein) E3 ubiquitin-protein ligase complex which mediates the ubiquitination and subsequent proteasomal degradation of target proteins. The SCF(CCNF) E3 ubiquitin-protein ligase complex is an integral component of the ubiquitin proteasome system (UPS) and links proteasome degradation to the cell cycle. Mediates the substrate recognition and the proteasomal degradation of various target proteins involved in the regulation of cell cycle progression and in the maintenance of genome stability. Mediates the ubiquitination and subsequent proteasomal degradation of CP110 during G2 phase, thereby acting as an inhibitor of centrosome reduplication. In G2, mediates the ubiquitination and proteasomal degradation of CDC6, thereby suppressing DNA re-replication and preventing genome instability. Involved in the ubiquitination and degradation of the substrate adapter CDH1 of the anaphase-promoting complex (APC/C), thereby acting as an antagonist of APC/C in regulating G1 progression and S phase entry. May play a role in the G2 cell cycle checkpoint control after DNA damage, possibly by promoting the ubiquitination of MYBL2/BMYB. In Mus musculus (Mouse), this protein is Cyclin-F (Ccnf).